The primary structure comprises 298 residues: Protoheme IX farnesyltransferase (298 aa).

Helical transmembrane passes span 16-36 (VVAL…PGMP), 45-65 (ALGF…NQLL), 97-117 (VLIV…TAVL), 141-161 (IVIG…AVTG), 172-192 (SLLV…LAIF), 223-243 (VLLA…VFYL), 244-264 (GGAV…LDPP), and 277-297 (VVYL…LPWV).

This sequence belongs to the UbiA prenyltransferase family. Protoheme IX farnesyltransferase subfamily.

Its subcellular location is the cell inner membrane. The catalysed reaction is heme b + (2E,6E)-farnesyl diphosphate + H2O = Fe(II)-heme o + diphosphate. The protein operates within porphyrin-containing compound metabolism; heme O biosynthesis; heme O from protoheme: step 1/1. Functionally, converts heme B (protoheme IX) to heme O by substitution of the vinyl group on carbon 2 of heme B porphyrin ring with a hydroxyethyl farnesyl side group. This chain is Protoheme IX farnesyltransferase, found in Xanthomonas campestris pv. campestris (strain 8004).